The chain runs to 319 residues: Lambda-crystallin homolog (319 aa).

A2 carries the post-translational modification N-acetylalanine. S3 bears the Phosphoserine mark. Residues 16–17 (LI), D36, E97, and K102 contribute to the NAD(+) site.

Belongs to the 3-hydroxyacyl-CoA dehydrogenase family. Homodimer. As to expression, widely expressed, with highest levels in liver. Undetectable in skeletal muscle.

The protein localises to the cytoplasm. The enzyme catalyses L-gulonate + NAD(+) = 3-dehydro-L-gulonate + NADH + H(+). With respect to regulation, inhibited by malonate. In terms of biological role, has high L-gulonate 3-dehydrogenase activity. It also exhibits low dehydrogenase activity toward L-3-hydroxybutyrate (HBA) and L-threonate. This chain is Lambda-crystallin homolog (Cryl1), found in Mus musculus (Mouse).